A 360-amino-acid polypeptide reads, in one-letter code: Inward rectifier potassium channel 13 (360 aa).

The Cytoplasmic segment spans residues 1–50; that stretch reads MDGSHCKVIAPLLTERHQRMVTKDGHSTLQMDGAQTGLAYLRDAWGILMD. Residues 51-77 form a helical membrane-spanning segment; it reads MRWRWMMLVFSASFVIHWLVFAVLWYI. Residues 78–105 lie on the Extracellular side of the membrane; sequence LAEMNGDLGLDHDAPPENHTICVKYITS. An intramembrane region (helical; Pore-forming) is located at residues 106–122; it reads FTAAFSFSLETQLTIGY. The short motif at 119-124 is the Selectivity filter element; sequence TIGYGT. The Extracellular portion of the chain corresponds to 123–131; sequence GTMFPSGDC. The helical transmembrane segment at 132 to 157 threads the bilayer; it reads PSAIALLAIQMLLGLMLEAFITGAFV. Topologically, residues 158–360 are cytoplasmic; it reads AKIARPKNRA…FQISETGLTE (203 aa). S287 carries the phosphoserine modification.

This sequence belongs to the inward rectifier-type potassium channel (TC 1.A.2.1) family. Homotetramer. Interacts with RAB28; the interaction may facilitate cone outer segments phagocytosis. Post-translationally, phosphorylation at Ser-287 by PKA increases them.

Its subcellular location is the membrane. It localises to the cell membrane. The enzyme catalyses K(+)(in) = K(+)(out). Inhibited by Ba(2+) and Cs(+), although sensitivity to those inhibitors is much lower than in other Kir channels. Its function is as follows. Inward rectifier potassium channels are characterized by a greater tendency to allow potassium to flow into the cell rather than out of it. Their voltage dependence is regulated by the concentration of extracellular potassium; as external potassium is raised, the voltage range of the channel opening shifts to more positive voltages. The inward rectification is mainly due to the blockage of outward current by internal magnesium. KCNJ13 has a very low single channel conductance, low sensitivity to block by external barium and cesium, and no dependence of its inward rectification properties on the internal blocking particle magnesium. The polypeptide is Inward rectifier potassium channel 13 (KCNJ13) (Bos taurus (Bovine)).